The following is a 114-amino-acid chain: Cytochrome c oxidase assembly protein cox16, mitochondrial (114 aa).

Residues 29–49 (PFLLFGLPFMSVIVAGSFILT) form a helical membrane-spanning segment.

Belongs to the COX16 family.

The protein localises to the mitochondrion inner membrane. Functionally, required for the assembly of the mitochondrial respiratory chain complex IV (CIV), also known as cytochrome c oxidase. May participate in merging the COX1 and COX2 assembly lines. The sequence is that of Cytochrome c oxidase assembly protein cox16, mitochondrial (cox-9) from Neurospora crassa (strain ATCC 24698 / 74-OR23-1A / CBS 708.71 / DSM 1257 / FGSC 987).